The chain runs to 231 residues: D-allulose-6-phosphate 3-epimerase (231 aa).

S6 is a binding site for substrate. A divalent metal cation contacts are provided by H30, D32, and H63. The Proton acceptor role is filled by D32. Residues H63, 140 to 143 (GFAG), 173 to 175 (DGS), and 195 to 197 (GTS) each bind substrate. An a divalent metal cation-binding site is contributed by D173. D173 (proton donor) is an active-site residue.

It belongs to the ribulose-phosphate 3-epimerase family. AlsE subfamily. Homohexamer. Trimer of dimers. Requires Co(2+) as cofactor. It depends on Mn(2+) as a cofactor. The cofactor is Zn(2+).

It catalyses the reaction D-allulose 6-phosphate = keto-D-fructose 6-phosphate. The protein operates within carbohydrate degradation; D-allose degradation. In terms of biological role, catalyzes the reversible epimerization of D-allulose 6-phosphate to D-fructose 6-phosphate. Can also catalyze with lower efficiency the reversible epimerization of D-ribulose 5-phosphate to D-xylulose 5-phosphate. This Escherichia coli (strain K12) protein is D-allulose-6-phosphate 3-epimerase.